The following is a 91-amino-acid chain: Mercuric transport protein periplasmic component (91 aa).

Residues Met-1 to Ala-19 form the signal peptide. One can recognise an HMA domain in the interval Gln-22 to Ser-88. Cys-33 and Cys-36 together coordinate Hg(2+).

It belongs to the MerP family. Monomer.

Its subcellular location is the periplasm. Involved in mercury resistance. Acts as a mercury scavenger that specifically binds to a mercuric ion in the periplasm and probably passes it to the cytoplasmic mercuric reductase MerA via the mercuric transport protein MerT. The chain is Mercuric transport protein periplasmic component from Acinetobacter calcoaceticus.